We begin with the raw amino-acid sequence, 246 residues long: Orotidine 5'-phosphate decarboxylase (246 aa).

Residues Asp-22, Lys-44, 71 to 80, Thr-130, Arg-191, Gln-201, Gly-221, and Arg-222 each bind substrate; that span reads DLKYHDIPHT. The active-site Proton donor is the Lys-73.

It belongs to the OMP decarboxylase family. Type 1 subfamily. Homodimer.

The catalysed reaction is orotidine 5'-phosphate + H(+) = UMP + CO2. It functions in the pathway pyrimidine metabolism; UMP biosynthesis via de novo pathway; UMP from orotate: step 2/2. In terms of biological role, catalyzes the decarboxylation of orotidine 5'-monophosphate (OMP) to uridine 5'-monophosphate (UMP). In Neisseria gonorrhoeae (strain ATCC 700825 / FA 1090), this protein is Orotidine 5'-phosphate decarboxylase.